The following is a 433-amino-acid chain: MAYPNGKLSEEKVFKDPVHRYVHVRDKLIWDLIGTREFQRLRRIKQLGTTYLTFHGAEHSRFNHSLGVYEIVRRMVDDVFKGRPEWDDSERELCLAAALLHDLGHGPFSHSFEKVFHLDHEDFTRGIILGDTEVNQVLRKVSPGFPQDVAEVIAKTYKNKQVVSLISSQIDADRMDYLQRDAYYTGVSYGHFDMERILRVMRPREDQIVIKESGMHAVEDYIMSRYQMYWQVYFHPVTRSAEVILTKILHRAKQLHDEGYVFTHAPVHFYSIFEGKLTLEDYVKLDESIILYYFQAWEDEEDAILSDLCRRFINRQLFQYVEFNPNEEMSAYFELTSLFKEAGIDPSYYLVVDSSSDLPYDFYRPGEEEERLPIHLLTQNGQIKELSRQSAIVESISGKRRTDHKLYYPKDLICDGTKHPEAKMKIRQLLGLT.

The region spanning 61–178 is the HD domain; that stretch reads RFNHSLGVYE…QIDADRMDYL (118 aa).

This is an uncharacterized protein from Bacillus subtilis (strain 168).